Here is a 950-residue protein sequence, read N- to C-terminus: Leucine--tRNA ligase (950 aa).

Positions 66-77 (PYPSGAGLHVGH) match the 'HIGH' region motif. The short motif at 721 to 725 (KIGKS) is the 'KMSKS' region element. Lysine 724 contacts ATP.

This sequence belongs to the class-I aminoacyl-tRNA synthetase family.

It localises to the cytoplasm. The catalysed reaction is tRNA(Leu) + L-leucine + ATP = L-leucyl-tRNA(Leu) + AMP + diphosphate. In Nocardia farcinica (strain IFM 10152), this protein is Leucine--tRNA ligase.